The primary structure comprises 86 residues: MAHKKAGGSSRNGRDSESKRLGVKRYAGQEVISGNIIIRQRGTQFYPGANVGIGKDHTLFATAEGVVKFERKGPRQVRTVSVVSAA.

Residues 1–22 (MAHKKAGGSSRNGRDSESKRLG) form a disordered region.

It belongs to the bacterial ribosomal protein bL27 family.

This is Large ribosomal subunit protein bL27 from Acidithiobacillus ferrooxidans (strain ATCC 23270 / DSM 14882 / CIP 104768 / NCIMB 8455) (Ferrobacillus ferrooxidans (strain ATCC 23270)).